Reading from the N-terminus, the 1028-residue chain is Unconventional myosin-Ic-A (1028 aa).

Met-1 carries the post-translational modification N-acetylmethionine. The Myosin motor domain maps to 12-696; sequence GVQDFVLLEN…TLFATEDALE (685 aa). 105–112 contributes to the ATP binding site; the sequence is GESGSGKT. Lys-348 bears the N6-methyllysine mark. Positions 573 to 595 are actin-binding; sequence LSKLMEILMSKEPSYVRCIKPND. IQ domains follow at residues 699-728 and 722-751; these read KQGI…SAIN and MKHS…AVDV. Residues 850–1024 form the TH1 domain; the sequence is KDNYPQSVPR…NGHLSVVAPR (175 aa).

It belongs to the TRAFAC class myosin-kinesin ATPase superfamily. Myosin family. As to quaternary structure, interacts (via its IQ motifs) with calmodulin.

The protein localises to the cytoplasm. It localises to the cell membrane. It is found in the cell projection. The protein resides in the stereocilium membrane. Functionally, myosins are actin-based motor molecules with ATPase activity. Unconventional myosins serve in intracellular movements. Their highly divergent tails are presumed to bind to membranous compartments, which would be moved relative to actin filaments. Involved in egg activation by coupling dynamic actin to membrane. This Xenopus laevis (African clawed frog) protein is Unconventional myosin-Ic-A (myo1c-a).